Reading from the N-terminus, the 23-residue chain is Retinol-binding protein 3 (23 aa).

Its subcellular location is the secreted. It is found in the extracellular space. It localises to the extracellular matrix. The protein localises to the interphotoreceptor matrix. IRBP shuttles 11-cis and all trans retinoids between the retinol isomerase in the pigment epithelium and the visual pigments in the photoreceptor cells of the retina. In Oryctolagus cuniculus (Rabbit), this protein is Retinol-binding protein 3 (RBP3).